A 356-amino-acid chain; its full sequence is uncharacterized protein (356 aa).

Residues 25 to 72 (EENNQENNKKFIEEFYPDKESDKNFSDDDSDDSDDSDDSENSDEEFDN) are disordered. Residues 31–50 (NNKKFIEEFYPDKESDKNFS) show a composition bias toward basic and acidic residues. The span at 51–70 (DDDSDDSDDSDDSENSDEEF) shows a compositional bias: acidic residues. The stretch at 328–356 (EDTLNHSHSNKIKELENKITELKYQNEIN) forms a coiled coil.

Belongs to the mimivirus L17/R827 family.

This is an uncharacterized protein from Acanthamoeba polyphaga mimivirus (APMV).